Consider the following 431-residue polypeptide: Argininosuccinate lyase (431 aa).

Belongs to the lyase 1 family. Argininosuccinate lyase subfamily.

The protein resides in the cytoplasm. The enzyme catalyses 2-(N(omega)-L-arginino)succinate = fumarate + L-arginine. It participates in amino-acid biosynthesis; L-arginine biosynthesis; L-arginine from L-ornithine and carbamoyl phosphate: step 3/3. The protein is Argininosuccinate lyase of Xanthomonas oryzae pv. oryzae (strain MAFF 311018).